Consider the following 182-residue polypeptide: Small ribosomal subunit protein uS5 (182 aa).

An S5 DRBM domain is found at 16 to 79 (FVDRLVHINR…EAAKRGMIYV (64 aa)).

This sequence belongs to the universal ribosomal protein uS5 family. In terms of assembly, part of the 30S ribosomal subunit. Contacts proteins S4 and S8.

With S4 and S12 plays an important role in translational accuracy. Its function is as follows. Located at the back of the 30S subunit body where it stabilizes the conformation of the head with respect to the body. This chain is Small ribosomal subunit protein uS5, found in Bartonella quintana (strain Toulouse) (Rochalimaea quintana).